Reading from the N-terminus, the 165-residue chain is MSAVASVKDFVSSFMLTELLKGMALTGKYMFSRKITIQFPEEKTPLSPRFRGLHALRRYENGEERCIACKLCEAVCPALAITIESDVREDGSRRTSRYDIDLTKCIFCGFCEESCPVDSIVETHILEYHGEKRGDLYFTKEMLLAVGDRYENEIAANRAADAKYR.

4Fe-4S ferredoxin-type domains lie at 57–86 (RRYE…IESD) and 96–125 (SRYD…ETHI). Cys-66, Cys-69, Cys-72, Cys-76, Cys-105, Cys-108, Cys-111, and Cys-115 together coordinate [4Fe-4S] cluster.

The protein belongs to the complex I 23 kDa subunit family. As to quaternary structure, NDH-1 is composed of 14 different subunits. Subunits NuoA, H, J, K, L, M, N constitute the membrane sector of the complex. [4Fe-4S] cluster serves as cofactor.

Its subcellular location is the cell inner membrane. It catalyses the reaction a quinone + NADH + 5 H(+)(in) = a quinol + NAD(+) + 4 H(+)(out). NDH-1 shuttles electrons from NADH, via FMN and iron-sulfur (Fe-S) centers, to quinones in the respiratory chain. The immediate electron acceptor for the enzyme in this species is believed to be ubiquinone. Couples the redox reaction to proton translocation (for every two electrons transferred, four hydrogen ions are translocated across the cytoplasmic membrane), and thus conserves the redox energy in a proton gradient. In Polaromonas naphthalenivorans (strain CJ2), this protein is NADH-quinone oxidoreductase subunit I.